Here is a 663-residue protein sequence, read N- to C-terminus: DNA topoisomerase 4 subunit B (663 aa).

ATP is bound by residues Tyr-7, Asn-47, Asp-74, 114-120 (GLHGVGA), and Lys-341. Positions 386-418 (REAARKAREDARSGKKNKRKDTLLSGKLTPAQS) are disordered. Residues 387 to 398 (EAARKAREDARS) show a composition bias toward basic and acidic residues. The Toprim domain maps to 424–538 (NELYLVEGDS…AGRVFIALPP (115 aa)). 3 residues coordinate Mg(2+): Glu-430, Asp-503, and Asp-505.

It belongs to the type II topoisomerase family. ParE type 2 subfamily. In terms of assembly, heterotetramer composed of ParC and ParE. Mg(2+) is required as a cofactor. The cofactor is Mn(2+). It depends on Ca(2+) as a cofactor.

It catalyses the reaction ATP-dependent breakage, passage and rejoining of double-stranded DNA.. Functionally, topoisomerase IV is essential for chromosome segregation. It relaxes supercoiled DNA. Performs the decatenation events required during the replication of a circular DNA molecule. The protein is DNA topoisomerase 4 subunit B of Staphylococcus aureus (strain MRSA252).